The chain runs to 261 residues: Protein FAM78B (261 aa).

Belongs to the FAM78 family.

This Homo sapiens (Human) protein is Protein FAM78B (FAM78B).